The chain runs to 436 residues: Bifunctional protein GlmU (436 aa).

Residues Met1 to Lys226 form a pyrophosphorylase region. UDP-N-acetyl-alpha-D-glucosamine-binding positions include Leu9–Gly12, Lys23, Gln75, and Gly82–Thr83. Asp105 serves as a coordination point for Mg(2+). Gly138, Glu152, Asn167, and Asn224 together coordinate UDP-N-acetyl-alpha-D-glucosamine. Asn224 is a binding site for Mg(2+). A linker region spans residues Phe227–Asn247. The tract at residues Gly248–Lys436 is N-acetyltransferase. Residues Arg311 and Lys328 each coordinate UDP-N-acetyl-alpha-D-glucosamine. The Proton acceptor role is filled by His339. UDP-N-acetyl-alpha-D-glucosamine-binding residues include Tyr342 and Asn353. Acetyl-CoA is bound by residues Asn362–Tyr363, Ser381, Ala399, and Arg416.

It in the N-terminal section; belongs to the N-acetylglucosamine-1-phosphate uridyltransferase family. In the C-terminal section; belongs to the transferase hexapeptide repeat family. As to quaternary structure, homotrimer. Mg(2+) is required as a cofactor.

Its subcellular location is the cytoplasm. It catalyses the reaction alpha-D-glucosamine 1-phosphate + acetyl-CoA = N-acetyl-alpha-D-glucosamine 1-phosphate + CoA + H(+). The enzyme catalyses N-acetyl-alpha-D-glucosamine 1-phosphate + UTP + H(+) = UDP-N-acetyl-alpha-D-glucosamine + diphosphate. The protein operates within nucleotide-sugar biosynthesis; UDP-N-acetyl-alpha-D-glucosamine biosynthesis; N-acetyl-alpha-D-glucosamine 1-phosphate from alpha-D-glucosamine 6-phosphate (route II): step 2/2. It participates in nucleotide-sugar biosynthesis; UDP-N-acetyl-alpha-D-glucosamine biosynthesis; UDP-N-acetyl-alpha-D-glucosamine from N-acetyl-alpha-D-glucosamine 1-phosphate: step 1/1. Its pathway is bacterial outer membrane biogenesis; LPS lipid A biosynthesis. Catalyzes the last two sequential reactions in the de novo biosynthetic pathway for UDP-N-acetylglucosamine (UDP-GlcNAc). The C-terminal domain catalyzes the transfer of acetyl group from acetyl coenzyme A to glucosamine-1-phosphate (GlcN-1-P) to produce N-acetylglucosamine-1-phosphate (GlcNAc-1-P), which is converted into UDP-GlcNAc by the transfer of uridine 5-monophosphate (from uridine 5-triphosphate), a reaction catalyzed by the N-terminal domain. This chain is Bifunctional protein GlmU, found in Campylobacter fetus subsp. fetus (strain 82-40).